Consider the following 365-residue polypeptide: MIKRIISIVFLLLTLPQLALAVRIKDIASFDGVRENQLIGYGLVVGLNGTGDSDQTNFPVQSLANVLERMGVTVNRNDITVKNVAAVMVTANLPPFAKQGTRIDTLVSSMGDAKSIAGGTLLMTPLKGADGRVYAVAQGGVLTNSFSYGGQAASAQKNHPTAGRVPNGGLVELELPNVLSDRGQLRLNLHQPDFTTATRIAQAVNERFKGGVAAATDPGAVMMNLPEAYKGRVVEFVADMERLEVRPDAMAKVVLNERTGTIVIGDNVRISTVAVSHGNLTLYIKETPKVSQPAPFSKTGETVVVPRTEIKVNEGGGGLAVVKEGASIGEVVRALNALGVTPRDLIGILQAIKAAGAMQAEVEVI.

The first 21 residues, Met-1–Ala-21, serve as a signal peptide directing secretion.

This sequence belongs to the FlgI family. The basal body constitutes a major portion of the flagellar organelle and consists of four rings (L,P,S, and M) mounted on a central rod.

It is found in the periplasm. It localises to the bacterial flagellum basal body. Assembles around the rod to form the L-ring and probably protects the motor/basal body from shearing forces during rotation. This chain is Flagellar P-ring protein, found in Geobacter metallireducens (strain ATCC 53774 / DSM 7210 / GS-15).